The chain runs to 834 residues: Enhancer of filamentation 1 (834 aa).

One can recognise an SH3 domain in the interval 3 to 65; it reads ARNLMARALY…PGNRVKLLIG (63 aa). Phosphotyrosine occurs at positions 92, 164, 166, 177, 189, 214, and 223. S296 is modified (phosphoserine). At Y317 the chain carries Phosphotyrosine. 2 disordered regions span residues 328–402 and 584–624; these read PPAE…DKRL and SQMP…SERS. Positions 332–344 are enriched in basic and acidic residues; that stretch reads TSEKANPEERDGV. Residues 360–363 carry the Caspase cleavage related site motif; sequence DVVD. Residues 368 to 397 show a composition bias toward low complexity; sequence LSFSSTGSTRSNMSTSSTTSKESSVSASPS. S369 is subject to Phosphoserine. The tract at residues 710 to 760 is divergent helix-loop-helix motif; that stretch reads FYYDQCETHYISLLNAIDALFSCVSSAQPPRIFVAHSKFVILSAHKLVFIG. The required for interaction with PLK1 stretch occupies residues 710 to 834; it reads FYYDQCETHY…KRSLLEMATF (125 aa). Residue S780 is modified to Phosphoserine. T804 carries the phosphothreonine modification.

The protein belongs to the CAS family. Homodimer. Forms heterodimers with BCAR1/p130cas. Forms complexes with PTK2B/RAFTK, adapter protein CRKL and LYN kinase. Part of a complex composed of NEDD9, AURKA and CTTN; within the complex NEDD9 acts as a scaffold protein and is required for complex formation. Part of a ternary complex composed of SMAD3, ITCH/AIP4 and NEDD9/HEF1; within the complex NEDD9/HEF1 interacts (via N-terminus) with ITCH/AIP4; the complex mediates ubiquitination and proteasomal degradation of NEDD9/HEF1. Interacts with ID2. Interacts with CTTN (via N-terminus). Interacts with MICAL. Interacts with TXNL4/DIM1. Interacts with BCAR3 (via Ras-GEF domain). Interacts with SH2D3C isoform 1 and isoform 2. Interacts with BCAR3. Interacts with ECT2. Interacts with PTPN11/SHP-2 (via SH2 domains); the interaction is enhanced when NEDD9/CAS-L is tyrosine phosphorylated. Interacts (via C-terminus) with PLK1 (via polo box domain). Interacts with NKX2-5. Interacts with SMAD3; the interaction is inhibited by oxidation of NEDD9. Interacts with ABL1; interaction is induced by CXCL12-mediated phosphorylation of NEDD/HEF1. Interacts (via SH3 domain) with PTK2/FAK. Interacts with FYN; in the presence of PTK2. Interacts with INPPL1/SHIP2. Polyubiquitinated by ITCH/AIP4, leading to proteasomal degradation. Post-translationally, PTK2/FAK1 phosphorylates the protein at the YDYVHL motif (conserved among all cas proteins) following integrin stimulation. The SRC family kinases (FYN, SRC, LCK and CRK) are recruited to the phosphorylated sites and can phosphorylate other tyrosine residues. Ligation of either integrin beta-1 or B-cell antigen receptor on tonsillar B-cells and B-cell lines promotes tyrosine phosphorylation and both integrin and BCR-mediated tyrosine phosphorylation requires an intact actin network. Phosphorylation is required to recruit NEDD9 to T-cell receptor microclusters at the periphery of newly formed immunological synapses. In fibroblasts transformation with oncogene v-ABL results in an increase in tyrosine phosphorylation. Transiently phosphorylated following CD3 cross-linking and this phosphorylated form binds to CRKL and C3G. A mutant lacking the SH3 domain is phosphorylated upon CD3 cross-linking but not upon integrin beta-1 cross-linking. Tyrosine phosphorylation occurs upon stimulation of the G-protein coupled C1a calcitonin receptor. Calcitonin-stimulated tyrosine phosphorylation is mediated by calcium- and protein kinase C-dependent mechanisms and requires the integrity of the actin cytoskeleton. Phosphorylation at Ser-369 induces proteasomal degradation. Phosphorylated by LYN. Phosphorylation at Ser-780 by CSNK1D or CSNK1E, or phosphorylation of Thr-804 by CSNK1E enhances the interaction of NEDD9 with PLK1.

It localises to the cytoplasm. The protein localises to the cell cortex. Its subcellular location is the nucleus. It is found in the golgi apparatus. The protein resides in the cell projection. It localises to the lamellipodium. The protein localises to the cell junction. Its subcellular location is the focal adhesion. It is found in the cytoskeleton. The protein resides in the spindle pole. It localises to the cilium. The protein localises to the cilium basal body. Its subcellular location is the basolateral cell membrane. Functionally, negatively regulates embryonic fibroblast migration. May play an important role in integrin beta-1 or B cell antigen receptor (BCR) mediated signaling in B- and T-cells. Integrin beta-1 stimulation leads to recruitment of various proteins including CRKl and SHPTP2 to the tyrosine phosphorylated form. Promotes adhesion and migration of lymphocytes; as a result required for the correct migration of lymphocytes to the spleen and other secondary lymphoid organs. Plays a role in the organization of T-cell F-actin cortical cytoskeleton and the centralization of T-cell receptor microclusters at the immunological synapse. Negatively regulates cilia outgrowth in polarized cysts. Modulates cilia disassembly via activation of AURKA-mediated phosphorylation of HDAC6 and subsequent deacetylation of alpha-tubulin. In conjunction with NKX2-5, positively regulates transcription of genes such as COL3A1 and MMP2, resulting in increased pulmonary endothelial fibrosis in response to hypoxia. Positively regulates RANKL-induced osteoclastogenesis. Required for the maintenance of hippocampal dendritic spines in the dentate gyrus and CA1 regions, thereby involved in spatial learning and memory. In Canis lupus familiaris (Dog), this protein is Enhancer of filamentation 1.